A 343-amino-acid chain; its full sequence is MSAFTPASEVLLRHSDDFEQSRILFAGDLQDDLPARLDTAASRAHTQQFHHWQVLSRQMGDNARFSLVATANDVADCDTLIYYWPKNKPEAQFQLMNLLSLLPVGTDIFVVGENRSGVRSAEQMLADYAPLNKVDSARRCGLYFGRLEKQPVFDANKFWGEYSVDGLTVKTLPGVFSRDGLDVGSQLLLSTLTPHTKGKVLDVGCGAGVLSVAFARHSPKIRLTLCDVSAPAVEASRATLAANSVEGEVFASNVFSEVKGRFDMIISNPPFHDGMQTSLDAAQTLIRGAVRHLNSGGELRIVANAFLPYPDVLDETFGFHEVIAQTGRFKVYRAIMTRQAKKG.

Belongs to the methyltransferase superfamily. RsmC family. In terms of assembly, monomer.

It is found in the cytoplasm. The catalysed reaction is guanosine(1207) in 16S rRNA + S-adenosyl-L-methionine = N(2)-methylguanosine(1207) in 16S rRNA + S-adenosyl-L-homocysteine + H(+). In terms of biological role, specifically methylates the guanine in position 1207 of 16S rRNA in the 30S particle. In Escherichia coli O7:K1 (strain IAI39 / ExPEC), this protein is Ribosomal RNA small subunit methyltransferase C.